We begin with the raw amino-acid sequence, 419 residues long: MSQEPSIHTWPGSYYINSEKRWASGVLSLSRTTLRFASEQKQESLMSLKLSRIMEIKMESSSIIFSALTVLEQGNLKHWFGSLRPCRNAVYHVLEHFWRERLLSPSEPQGAEAPLSKGQELISLISGAQRRLEDTGKVLNHQGEQFDNMIQGLDKIESDLTVADKLLSELECPSWWPFSKMPWRSHQEAKSEAAAKAACTKGSGKIQKVIVSIPAIVFRDGNTGNMKPGSLTLLVSSLEVREANGQLLHCFEKEEVDDIHVFNPYEISIRQRFIGKPDICFRLLSARMTEALSVLEMQYKKKVEVTRDYAVFRSTSATTPESPESGGNVWAAGHGQDTEVPVEVPAGELTQLQLQVLQPTVTEAEAQELKQMLQQLKNLALEAETELERQDEALDVLSCSTDHATMNINRHTRRMRKLL.

2 t-SNARE coiled-coil homology domains span residues 108-170 and 356-418; these read PQGA…LSEL and VLQP…MRKL.

Belongs to the SVAP1 family.

Its function is as follows. May play a role in intracellular membrane fusion. The polypeptide is Synaptosomal-associated protein 47 (snap47) (Danio rerio (Zebrafish)).